A 600-amino-acid polypeptide reads, in one-letter code: Methionine--tRNA ligase (600 aa).

The 'HIGH' region motif lies at 12–22; sequence PYANGPRHIGH. Zn(2+)-binding residues include Cys144, Cys147, Cys157, and Cys160. The short motif at 351 to 355 is the 'KMSKS' region element; the sequence is KFSSS. Ser354 is a binding site for ATP.

The protein belongs to the class-I aminoacyl-tRNA synthetase family. MetG type 1 subfamily. As to quaternary structure, monomer. Zn(2+) serves as cofactor.

It localises to the cytoplasm. The catalysed reaction is tRNA(Met) + L-methionine + ATP = L-methionyl-tRNA(Met) + AMP + diphosphate. In terms of biological role, is required not only for elongation of protein synthesis but also for the initiation of all mRNA translation through initiator tRNA(fMet) aminoacylation. This chain is Methionine--tRNA ligase, found in Chloroflexus aurantiacus (strain ATCC 29364 / DSM 637 / Y-400-fl).